The sequence spans 283 residues: Small aggregate formation protein (283 aa).

The protein resides in the cytoplasm. Functionally, knockout of the gene for this protein causes small aggregate formation. May regulate the secretion or processing of a secreted factor that regulates aggregate size. The protein is Small aggregate formation protein (smlA) of Dictyostelium discoideum (Social amoeba).